We begin with the raw amino-acid sequence, 233 residues long: 7-cyano-7-deazaguanine synthase (233 aa).

ATP is bound at residue 11 to 21 (LSGGLDSSTVL). Residues C195, C203, C206, and C209 each contribute to the Zn(2+) site.

This sequence belongs to the QueC family. Requires Zn(2+) as cofactor.

The enzyme catalyses 7-carboxy-7-deazaguanine + NH4(+) + ATP = 7-cyano-7-deazaguanine + ADP + phosphate + H2O + H(+). It functions in the pathway purine metabolism; 7-cyano-7-deazaguanine biosynthesis. In terms of biological role, catalyzes the ATP-dependent conversion of 7-carboxy-7-deazaguanine (CDG) to 7-cyano-7-deazaguanine (preQ(0)). In Thermosynechococcus vestitus (strain NIES-2133 / IAM M-273 / BP-1), this protein is 7-cyano-7-deazaguanine synthase.